Consider the following 158-residue polypeptide: Inner membrane assembly complex subunit 17 (158 aa).

Residues 1–15 (MFRPLVKRVVTRRFL) constitute a mitochondrion transit peptide. At 16–85 (AAANNSNAHI…KTQETSLKKF (70 aa)) the chain is on the mitochondrial matrix side. The chain crosses the membrane as a helical span at residues 86 to 108 (VRPAWIFLLMGSIVYLSCHYVWW). Topologically, residues 109–158 (KLDYEEKELEYTHKVHQLESELAALNEAHNSSVSSDKNSKRSSRKWYKFW) are mitochondrial intermembrane. Residues 110-140 (LDYEEKELEYTHKVHQLESELAALNEAHNSS) are a coiled coil.

The protein belongs to the INA17 family. In terms of assembly, component of the inner membrane assembly (INA) complex, composed of INA17 and INA22. Interacts with a subset of F(1)F(0)-ATP synthase subunits of the F(1)-domain and the peripheral stalk.

The protein localises to the mitochondrion inner membrane. Its function is as follows. Component of the INA complex (INAC) that promotes the biogenesis of mitochondrial F(1)F(0)-ATP synthase. INAC facilitates the assembly of the peripheral stalk and promotes the assembly of the catalytic F(1)-domain with the membrane-embedded F(0)-domain. This is Inner membrane assembly complex subunit 17 from Kluyveromyces lactis (strain ATCC 8585 / CBS 2359 / DSM 70799 / NBRC 1267 / NRRL Y-1140 / WM37) (Yeast).